Here is a 108-residue protein sequence, read N- to C-terminus: UPF0060 membrane protein Spro_2289 (108 aa).

4 consecutive transmembrane segments (helical) span residues 6-26, 31-51, 61-81, and 85-105; these read LLFF…YLWL, SAWL…LLTL, AAYG…VDGV, and ALDW…VSGW.

The protein belongs to the UPF0060 family.

The protein localises to the cell inner membrane. The sequence is that of UPF0060 membrane protein Spro_2289 from Serratia proteamaculans (strain 568).